Consider the following 570-residue polypeptide: GDP-Man:Man(3)GlcNAc(2)-PP-Dol alpha-1,2-mannosyltransferase (570 aa).

The Lumenal portion of the chain corresponds to 1 to 7 (MKLADFV). The helical transmembrane segment at 8-70 (TYVFGSLLAG…DFGWKNSSVR (63 aa)) threads the bilayer. Topologically, residues 71 to 200 (RAFILASERP…RLVESKSWPK (130 aa)) are cytoplasmic. Positions 201–221 (FTLLGQAYGSIILSIEALTTL) form an intramembrane region, helical. Over 222 to 446 (APDYWIDTMG…FGINAMWNEH (225 aa)) the chain is Cytoplasmic. The segment at residues 447-467 (FGIAVVEYMASGLIPLCHASA) is an intramembrane region (helical). At 468–570 (GPLYDIVVPW…LNLTHNRMFS (103 aa)) the chain is on the cytoplasmic side.

This sequence belongs to the glycosyltransferase group 1 family.

Its subcellular location is the endoplasmic reticulum membrane. It carries out the reaction an alpha-D-Man-(1-&gt;3)-[alpha-D-Man-(1-&gt;6)]-beta-D-Man-(1-&gt;4)-beta-D-GlcNAc-(1-&gt;4)-alpha-D-GlcNAc-diphospho-di-trans,poly-cis-dolichol + 2 GDP-alpha-D-mannose = an alpha-D-Man-(1-&gt;2)-alpha-D-Man-(1-&gt;2)-alpha-D-Man-(1-&gt;3)-[alpha-D-Man-(1-&gt;6)]-beta-D-Man-(1-&gt;4)-beta-D-GlcNAc-(1-&gt;4)-alpha-D-GlcNAc-diphospho-di-trans,poly-cis-dolichol + 2 GDP + 2 H(+). Its pathway is protein modification; protein glycosylation. GDP-Man:Man(3)GlcNAc(2)-PP-Dol alpha-1,2-mannosyltransferase that operates in the biosynthetic pathway of dolichol-linked oligosaccharides, the glycan precursors employed in protein asparagine (N)-glycosylation. The assembly of dolichol-linked oligosaccharides begins on the cytosolic side of the endoplasmic reticulum membrane and finishes in its lumen. The sequential addition of sugars to dolichol pyrophosphate produces dolichol-linked oligosaccharides containing fourteen sugars, including two GlcNAcs, nine mannoses and three glucoses. Once assembled, the oligosaccharide is transferred from the lipid to nascent proteins by oligosaccharyltransferases. Catalyzes, on the cytoplasmic face of the endoplasmic reticulum, the addition of the fourth and fifth mannose residues to the dolichol-linked oligosaccharide chain, to produce Man(5)GlcNAc(2)-PP-dolichol core oligosaccharide. The sequence is that of GDP-Man:Man(3)GlcNAc(2)-PP-Dol alpha-1,2-mannosyltransferase (ALG11) from Kluyveromyces lactis (strain ATCC 8585 / CBS 2359 / DSM 70799 / NBRC 1267 / NRRL Y-1140 / WM37) (Yeast).